A 115-amino-acid polypeptide reads, in one-letter code: Putative TGFB1-induced anti-apoptotic factor 1 (115 aa).

As to expression, not detectable in normal kidney and liver. Up-regulated in chronic and acute allograft rejection: expressed in the inflammatory infiltrate and in tubular epithelial cells.

It is found in the nucleus. In terms of biological role, inhibits the cytotoxic effects of TNF-alpha and overexpressed TNF receptor adapters TRADD, FADD, and RIPK1. Involved in TGF-beta1 inhibition of IkappaB-alpha expression and suppression of TNF-mediated IkappaB-alpha degradation. The protein is Putative TGFB1-induced anti-apoptotic factor 1 (MYO18A) of Homo sapiens (Human).